A 96-amino-acid chain; its full sequence is Integration host factor subunit beta (96 aa).

A disordered region spans residues 59-86 (RVGRNPKTGETVELDGKHVPHFKPGKEL). Residues 72 to 86 (LDGKHVPHFKPGKEL) are compositionally biased toward basic and acidic residues.

Belongs to the bacterial histone-like protein family. In terms of assembly, heterodimer of an alpha and a beta chain.

Functionally, this protein is one of the two subunits of integration host factor, a specific DNA-binding protein that functions in genetic recombination as well as in transcriptional and translational control. The protein is Integration host factor subunit beta of Pseudoalteromonas atlantica (strain T6c / ATCC BAA-1087).